Consider the following 358-residue polypeptide: 3-dehydroquinate synthase (358 aa).

Residues 69 to 74 (DGEQYK), 103 to 107 (GVIGD), 127 to 128 (TT), lysine 140, lysine 149, and 167 to 170 (TLNT) contribute to the NAD(+) site. Zn(2+) contacts are provided by glutamate 182, histidine 245, and histidine 262.

It belongs to the sugar phosphate cyclases superfamily. Dehydroquinate synthase family. Co(2+) serves as cofactor. Zn(2+) is required as a cofactor. The cofactor is NAD(+).

Its subcellular location is the cytoplasm. The enzyme catalyses 7-phospho-2-dehydro-3-deoxy-D-arabino-heptonate = 3-dehydroquinate + phosphate. It functions in the pathway metabolic intermediate biosynthesis; chorismate biosynthesis; chorismate from D-erythrose 4-phosphate and phosphoenolpyruvate: step 2/7. Functionally, catalyzes the conversion of 3-deoxy-D-arabino-heptulosonate 7-phosphate (DAHP) to dehydroquinate (DHQ). This is 3-dehydroquinate synthase from Hydrogenovibrio crunogenus (strain DSM 25203 / XCL-2) (Thiomicrospira crunogena).